The chain runs to 96 residues: Small ribosomal subunit protein uS19 (96 aa).

It belongs to the universal ribosomal protein uS19 family.

Protein S19 forms a complex with S13 that binds strongly to the 16S ribosomal RNA. This Solibacter usitatus (strain Ellin6076) protein is Small ribosomal subunit protein uS19.